Here is a 201-residue protein sequence, read N- to C-terminus: CASP-like protein 2B2 (201 aa).

Residues 1-28 (MSYLGVGVSPGNVTGSSTKMKLIDRKVR) lie on the Cytoplasmic side of the membrane. A helical membrane pass occupies residues 29–49 (VTELILRSLVCAFALVAAILV). The Extracellular portion of the chain corresponds to 50–71 (ATDVQVREIFTIQKKAKFTDMK). The chain crosses the membrane as a helical span at residues 72–92 (ALVFLVVINGIAAGYSLVQAV). Over 93–108 (CCLVGLMKGSVLLSEP) the chain is Cytoplasmic. A helical membrane pass occupies residues 109 to 129 (LAWAIFFGDQAVAYLCVAGVA). Topologically, residues 130–166 (AAAQSAAFAKLGQPELQWMKICDMYGKFCNQVGEGIA) are extracellular. A helical transmembrane segment spans residues 167-187 (SALFACIGMVLISCISAFGVF). Residues 188 to 201 (RLYGGSKPRQSSRW) are Cytoplasmic-facing.

This sequence belongs to the Casparian strip membrane proteins (CASP) family. In terms of assembly, homodimer and heterodimers.

The protein localises to the cell membrane. The polypeptide is CASP-like protein 2B2 (Arabidopsis lyrata subsp. lyrata (Lyre-leaved rock-cress)).